We begin with the raw amino-acid sequence, 145 residues long: Putative nickel-responsive regulator (145 aa).

Positions 77, 88, 90, and 96 each coordinate Ni(2+).

Belongs to the transcriptional regulatory CopG/NikR family. The cofactor is Ni(2+).

Functionally, transcriptional regulator. The chain is Putative nickel-responsive regulator from Rhizobium rhizogenes (strain K84 / ATCC BAA-868) (Agrobacterium radiobacter).